Here is a 557-residue protein sequence, read N- to C-terminus: 6-methylpretetramide 4-monooxygenase (557 aa).

FAD contacts are provided by residues 9 to 38 and 278 to 288; these read QVLI…VIDR and MRSGRCFVAGD. The segment at 530–557 is disordered; it reads LPEDTAPGAGDSAGRPAPDGTRRGVTTE.

This sequence belongs to the PheA/TfdB FAD monooxygenase family. Requires FAD as cofactor.

The enzyme catalyses 6-methylpretetramide + NADPH + O2 + 2 H(+) = 4-hydroxy-6-methylpretetramide + NADP(+) + H2O. It catalyses the reaction 4-hydroxy-6-methylpretetramide + NADPH + O2 = 4-dedimethylamino-4-oxo-anhydrotetracycline + NADP(+) + H2O. It participates in antibiotic biosynthesis; oxytetracycline biosynthesis. In terms of biological role, involved in the biosynthesis of the tetracycline antibiotic, oxytetracycline. Catalyzes the double hydroxylation of 6-methylpretetramide to yield 4-keto-anhydrotetracycline, via the insertion of oxygen atoms at the C-12a and C-4 positions of 6-pretetramid. The polypeptide is 6-methylpretetramide 4-monooxygenase (Streptomyces rimosus).